A 158-amino-acid chain; its full sequence is Transcription elongation factor GreA (158 aa).

Residues Asn-48–Ala-75 adopt a coiled-coil conformation.

This sequence belongs to the GreA/GreB family.

Necessary for efficient RNA polymerase transcription elongation past template-encoded arresting sites. The arresting sites in DNA have the property of trapping a certain fraction of elongating RNA polymerases that pass through, resulting in locked ternary complexes. Cleavage of the nascent transcript by cleavage factors such as GreA or GreB allows the resumption of elongation from the new 3'terminus. GreA releases sequences of 2 to 3 nucleotides. In Shouchella clausii (strain KSM-K16) (Alkalihalobacillus clausii), this protein is Transcription elongation factor GreA.